A 141-amino-acid chain; its full sequence is Myosin regulatory light chain cdc4 (141 aa).

2 positions are modified to phosphoserine: Ser2 and Ser6. EF-hand domains follow at residues 3–38 (TDDSPYKQAFSLFDRHGTGRIPKTSIGDLLRACGQN), 74–109 (GDPEEFVKGFQVFDKDATGMIGVGELRYVLTSLGEK), and 109–141 (KLSNEEMDELLKGVPVKDGMVNYHDFVQMILAN). 5 residues coordinate Ca(2+): Asp87, Asp89, Thr91, Met93, and Glu98.

In terms of assembly, binds to myosin II chains myo2 and myo3. Interacts with vps27 and a PI 4-kinase pik1. Post-translationally, phosphorylated on either Ser-2 or Ser-6 but not both. Phosphorylation is not essential for the function of the protein.

The protein resides in the cytoplasm. Its function is as follows. Involved in cytokinesis. Required for the formation and function of the contractile ring. This chain is Myosin regulatory light chain cdc4 (cdc4), found in Schizosaccharomyces pombe (strain 972 / ATCC 24843) (Fission yeast).